Here is a 384-residue protein sequence, read N- to C-terminus: Succinyl-diaminopimelate desuccinylase (384 aa).

Histidine 71 is a Zn(2+) binding site. Residue aspartate 73 is part of the active site. Position 104 (aspartate 104) interacts with Zn(2+). The active-site Proton acceptor is glutamate 139. Zn(2+)-binding residues include glutamate 140, glutamate 168, and histidine 357.

It belongs to the peptidase M20A family. DapE subfamily. Homodimer. The cofactor is Zn(2+). It depends on Co(2+) as a cofactor.

It carries out the reaction N-succinyl-(2S,6S)-2,6-diaminopimelate + H2O = (2S,6S)-2,6-diaminopimelate + succinate. Its pathway is amino-acid biosynthesis; L-lysine biosynthesis via DAP pathway; LL-2,6-diaminopimelate from (S)-tetrahydrodipicolinate (succinylase route): step 3/3. Its function is as follows. Catalyzes the hydrolysis of N-succinyl-L,L-diaminopimelic acid (SDAP), forming succinate and LL-2,6-diaminopimelate (DAP), an intermediate involved in the bacterial biosynthesis of lysine and meso-diaminopimelic acid, an essential component of bacterial cell walls. The protein is Succinyl-diaminopimelate desuccinylase of Bradyrhizobium sp. (strain ORS 278).